A 632-amino-acid chain; its full sequence is Protein NSP-INTERACTING KINASE 3 (632 aa).

Positions 1–25 (MEGVRFVVWRLGFLVFVWFFDISSA) are cleaved as a signal peptide. The Extracellular portion of the chain corresponds to 26–238 (TLSPTGVNYE…GTRTNGHHVA (213 aa)). Asn96 carries N-linked (GlcNAc...) asparagine glycosylation. LRR repeat units lie at residues 97 to 121 (LTYL…IGRL), 122 to 145 (EKLQ…LGEL), 147 to 168 (NLNY…SLSK), and 169 to 193 (IEGL…SART). Residues Asn131, Asn155, Asn181, and Asn210 are each glycosylated (N-linked (GlcNAc...) asparagine). Residues 239–259 (LAFAASFSAAFFVFFTSGMFL) form a helical membrane-spanning segment. The Cytoplasmic segment spans residues 260-632 (WWRYRRNKQI…VEAIELSGPR (373 aa)). Thr298 bears the Phosphothreonine mark. In terms of domain architecture, Protein kinase spans 301 to 584 (FNSKNILGRG…EGDGLAERWE (284 aa)). 307–315 (LGRGGYGIV) provides a ligand contact to ATP. Thr324 is modified (phosphothreonine). Residue Lys329 coordinates ATP. Phosphoserine occurs at positions 382 and 385. Positions 415–495 (YLHEQCDPKI…DVFGFGILLL (81 aa)) are interaction with geminivirus NSP protein. Asp428 (proton acceptor) is an active-site residue. Phosphothreonine is present on residues Thr461, Thr462, and Thr467. Tyr475 carries the post-translational modification Phosphotyrosine. Phosphoserine is present on Ser477. Thr478 is modified (phosphothreonine). Ser482 is subject to Phosphoserine. At Thr557 the chain carries Phosphothreonine.

It belongs to the protein kinase superfamily. Ser/Thr protein kinase family. Oligomer. Interacts with geminivirus nuclear shuttle protein (NSP). Post-translationally, autophosphorylated. In terms of tissue distribution, expressed in seedlings, leaves and flowers.

It is found in the cell membrane. It carries out the reaction L-seryl-[protein] + ATP = O-phospho-L-seryl-[protein] + ADP + H(+). The enzyme catalyses L-threonyl-[protein] + ATP = O-phospho-L-threonyl-[protein] + ADP + H(+). Its activity is regulated as follows. Inhibited by the viral nuclear shuttle protein (NSP) that binds to the region required for oligomerization. Its function is as follows. Involved in defense response to geminivirus infection. This Arabidopsis thaliana (Mouse-ear cress) protein is Protein NSP-INTERACTING KINASE 3 (NIK3).